We begin with the raw amino-acid sequence, 138 residues long: Basic phospholipase A2 Cll-N6 (138 aa).

Positions 1 to 16 (MRTFWIVAVLLVGVEG) are cleaved as a signal peptide. Cystine bridges form between Cys42–Cys131, Cys44–Cys60, Cys59–Cys111, Cys65–Cys138, Cys66–Cys104, Cys73–Cys97, and Cys91–Cys102. Residues Tyr43, Gly45, and Gly47 each contribute to the Ca(2+) site. The active site involves His63. Asp64 lines the Ca(2+) pocket. Asp105 is an active-site residue.

As to quaternary structure, monomer. Ca(2+) serves as cofactor. As to expression, expressed by the venom gland.

It localises to the secreted. The catalysed reaction is a 1,2-diacyl-sn-glycero-3-phosphocholine + H2O = a 1-acyl-sn-glycero-3-phosphocholine + a fatty acid + H(+). Snake venom phospholipase A2 (PLA2) that shows myotoxic activities. PLA2 catalyzes the calcium-dependent hydrolysis of the 2-acyl groups in 3-sn-phosphoglycerides. This Crotalus lepidus lepidus (Mottled rock rattlesnake) protein is Basic phospholipase A2 Cll-N6.